A 96-amino-acid polypeptide reads, in one-letter code: Co-chaperonin GroES (96 aa).

Belongs to the GroES chaperonin family. Heptamer of 7 subunits arranged in a ring. Interacts with the chaperonin GroEL.

Its subcellular location is the cytoplasm. Its function is as follows. Together with the chaperonin GroEL, plays an essential role in assisting protein folding. The GroEL-GroES system forms a nano-cage that allows encapsulation of the non-native substrate proteins and provides a physical environment optimized to promote and accelerate protein folding. GroES binds to the apical surface of the GroEL ring, thereby capping the opening of the GroEL channel. The chain is Co-chaperonin GroES from Polaromonas sp. (strain JS666 / ATCC BAA-500).